Consider the following 647-residue polypeptide: Chaperone protein DnaK (647 aa).

Threonine 198 bears the Phosphothreonine; by autocatalysis mark. Composition is skewed to basic and acidic residues over residues 514–529 (AEAN…ESVD), 540–557 (STEK…DADK), and 600–622 (SQEK…KDDN). 2 disordered regions span residues 514-557 (AEAN…DADK) and 596-647 (AIYK…EKSA). The segment covering 623-632 (VVDADFEEVK) has biased composition (acidic residues). Basic and acidic residues predominate over residues 633–647 (EESKEGKEEDKEKSA).

The protein belongs to the heat shock protein 70 family.

Functionally, acts as a chaperone. The polypeptide is Chaperone protein DnaK (Pelagibacter ubique (strain HTCC1062)).